We begin with the raw amino-acid sequence, 477 residues long: Glycogen synthase (477 aa).

Lys15 serves as a coordination point for ADP-alpha-D-glucose.

Belongs to the glycosyltransferase 1 family. Bacterial/plant glycogen synthase subfamily.

It carries out the reaction [(1-&gt;4)-alpha-D-glucosyl](n) + ADP-alpha-D-glucose = [(1-&gt;4)-alpha-D-glucosyl](n+1) + ADP + H(+). It functions in the pathway glycan biosynthesis; glycogen biosynthesis. Its function is as follows. Synthesizes alpha-1,4-glucan chains using ADP-glucose. This Streptococcus pneumoniae (strain ATCC 700669 / Spain 23F-1) protein is Glycogen synthase.